Here is a 155-residue protein sequence, read N- to C-terminus: Interleukin-2 (155 aa).

Residues 1–20 form the signal peptide; sequence MYKIQLLSCIALTLALVANG. A glycan (O-linked (GalNAc...) threonine) is linked at threonine 23. Residues cysteine 79 and cysteine 127 are joined by a disulfide bond.

Belongs to the IL-2 family.

It is found in the secreted. Functionally, cytokine produced by activated CD4-positive helper T-cells and to a lesser extend activated CD8-positive T-cells and natural killer (NK) cells that plays pivotal roles in the immune response and tolerance. Binds to a receptor complex composed of either the high-affinity trimeric IL-2R (IL2RA/CD25, IL2RB/CD122 and IL2RG/CD132) or the low-affinity dimeric IL-2R (IL2RB and IL2RG). Interaction with the receptor leads to oligomerization and conformation changes in the IL-2R subunits resulting in downstream signaling starting with phosphorylation of JAK1 and JAK3. In turn, JAK1 and JAK3 phosphorylate the receptor to form a docking site leading to the phosphorylation of several substrates including STAT5. This process leads to activation of several pathways including STAT, phosphoinositide-3-kinase/PI3K and mitogen-activated protein kinase/MAPK pathways. Functions as a T-cell growth factor and can increase NK-cell cytolytic activity as well. Promotes strong proliferation of activated B-cells and subsequently immunoglobulin production. Plays a pivotal role in regulating the adaptive immune system by controlling the survival and proliferation of regulatory T-cells, which are required for the maintenance of immune tolerance. Moreover, participates in the differentiation and homeostasis of effector T-cell subsets, including Th1, Th2, Th17 as well as memory CD8-positive T-cells. This Moschus berezovskii (Chinese forest musk deer) protein is Interleukin-2 (IL2).